A 428-amino-acid polypeptide reads, in one-letter code: Putative UPF0496 protein 5 (428 aa).

Residues 1–14 (MGNRHGIMRPRRLA) are compositionally biased toward basic residues. A disordered region spans residues 1-40 (MGNRHGIMRPRRLASGRSAAAAEEEGEDGEGEPGSYEAAC). The span at 22–31 (AEEEGEDGEG) shows a compositional bias: acidic residues. 2 helical membrane passes run 229–249 (IVFL…AAIA) and 252–272 (PVAA…GKWM).

The protein belongs to the UPF0496 family.

The protein localises to the membrane. This Oryza sativa subsp. indica (Rice) protein is Putative UPF0496 protein 5.